The primary structure comprises 864 residues: Leucine--tRNA ligase (864 aa).

The 'HIGH' region signature appears at 42 to 52 (PYPSGKLHMGH). Residues 624–628 (KMSKS) carry the 'KMSKS' region motif. Residue Lys627 coordinates ATP.

The protein belongs to the class-I aminoacyl-tRNA synthetase family.

It localises to the cytoplasm. It carries out the reaction tRNA(Leu) + L-leucine + ATP = L-leucyl-tRNA(Leu) + AMP + diphosphate. In Burkholderia multivorans (strain ATCC 17616 / 249), this protein is Leucine--tRNA ligase.